The following is a 535-amino-acid chain: Flavin-containing monooxygenase 1 (535 aa).

An N-acetylalanine modification is found at Ala-2. At 2–513 (AKRVAIVGAG…TRIVQESSSP (512 aa)) the chain is on the lumenal side. FAD contacts are provided by residues 9–13 (GAGVS), Glu-32, 40–41 (LW), and 61–62 (NS). Residues 60 to 61 (SN) and 195 to 198 (SGTD) contribute to the NADP(+) site. A helical transmembrane segment spans residues 514 to 534 (FESLLKLFAVLALLVSVFLIF). Leu-535 is a topological domain (cytoplasmic).

The protein belongs to the FMO family. It depends on FAD as a cofactor. Liver.

It is found in the endoplasmic reticulum membrane. It carries out the reaction hypotaurine + NADPH + O2 + H(+) = taurine + NADP(+) + H2O. The catalysed reaction is hypotaurine + NADH + O2 + H(+) = taurine + NAD(+) + H2O. It catalyses the reaction trimethylamine + NADPH + O2 = trimethylamine N-oxide + NADP(+) + H2O. The enzyme catalyses N,N-dimethylaniline + NADPH + O2 + H(+) = N,N-dimethylaniline N-oxide + NADP(+) + H2O. In terms of biological role, broad spectrum monooxygenase that catalyzes the oxygenation of a wide variety of nitrogen- and sulfur-containing compounds including xenobiotics. Catalyzes the S-oxygenation of hypotaurine to produce taurine, an organic osmolyte involved in cell volume regulation as well as a variety of cytoprotective and developmental processes. In vitro, catalyzes the N-oxygenation of trimethylamine (TMA) to produce trimethylamine N-oxide (TMAO) and could therefore participate to the detoxification of this compound that is generated by the action of gut microbiota from dietary precursors such as choline, choline containing compounds, betaine or L-carnitine. In Oryctolagus cuniculus (Rabbit), this protein is Flavin-containing monooxygenase 1 (FMO1).